The following is a 204-amino-acid chain: Small ribosomal subunit protein uS7 (204 aa).

M1 is subject to N-acetylmethionine. T2 is subject to N-acetylthreonine; in 40S ribosomal protein S5, N-terminally processed. T14 is subject to Phosphothreonine. K47 is modified (N6-acetyllysine; alternate). K47 is covalently cross-linked (Glycyl lysine isopeptide (Lys-Gly) (interchain with G-Cter in SUMO2); alternate). A Phosphoserine modification is found at S142.

This sequence belongs to the universal ribosomal protein uS7 family. In terms of assembly, component of the small ribosomal subunit. Part of the small subunit (SSU) processome, composed of more than 70 proteins and the RNA chaperone small nucleolar RNA (snoRNA) U3.

It is found in the cytoplasm. The protein localises to the nucleus. It localises to the nucleolus. Component of the small ribosomal subunit. The ribosome is a large ribonucleoprotein complex responsible for the synthesis of proteins in the cell. Part of the small subunit (SSU) processome, first precursor of the small eukaryotic ribosomal subunit. During the assembly of the SSU processome in the nucleolus, many ribosome biogenesis factors, an RNA chaperone and ribosomal proteins associate with the nascent pre-rRNA and work in concert to generate RNA folding, modifications, rearrangements and cleavage as well as targeted degradation of pre-ribosomal RNA by the RNA exosome. The sequence is that of Small ribosomal subunit protein uS7 (RPS5) from Bos taurus (Bovine).